The sequence spans 659 residues: DNA mismatch repair protein MutL (659 aa).

Belongs to the DNA mismatch repair MutL/HexB family.

In terms of biological role, this protein is involved in the repair of mismatches in DNA. It is required for dam-dependent methyl-directed DNA mismatch repair. May act as a 'molecular matchmaker', a protein that promotes the formation of a stable complex between two or more DNA-binding proteins in an ATP-dependent manner without itself being part of a final effector complex. The polypeptide is DNA mismatch repair protein MutL (Ligilactobacillus salivarius (strain UCC118) (Lactobacillus salivarius)).